We begin with the raw amino-acid sequence, 323 residues long: DNA-directed RNA polymerase subunit alpha (323 aa).

The alpha N-terminal domain (alpha-NTD) stretch occupies residues 1 to 233; it reads MGQEKVTVST…DLFIPFFHAE (233 aa). An alpha C-terminal domain (alpha-CTD) region spans residues 264 to 323; the sequence is IALKYIYIDQSELPPRVYNCLKRSNINTFLELLNNSQEELMKIQDFRIEDVKHILDVLEI.

Belongs to the RNA polymerase alpha chain family. In terms of assembly, in plastids the minimal PEP RNA polymerase catalytic core is composed of four subunits: alpha, beta, beta', and beta''. When a (nuclear-encoded) sigma factor is associated with the core the holoenzyme is formed, which can initiate transcription.

The protein resides in the plastid. The protein localises to the chloroplast. The catalysed reaction is RNA(n) + a ribonucleoside 5'-triphosphate = RNA(n+1) + diphosphate. Functionally, DNA-dependent RNA polymerase catalyzes the transcription of DNA into RNA using the four ribonucleoside triphosphates as substrates. This chain is DNA-directed RNA polymerase subunit alpha, found in Morus indica (Mulberry).